The chain runs to 203 residues: dITP/XTP pyrophosphatase (203 aa).

8 to 13 provides a ligand contact to substrate; it reads SNNAGK. Aspartate 40 and aspartate 69 together coordinate Mg(2+). The active-site Proton acceptor is aspartate 69. Residues serine 70, 152–155, lysine 175, and 180–181 contribute to the substrate site; these read FGYD and HR.

Belongs to the HAM1 NTPase family. Homodimer. Mg(2+) serves as cofactor.

It catalyses the reaction XTP + H2O = XMP + diphosphate + H(+). It carries out the reaction dITP + H2O = dIMP + diphosphate + H(+). The enzyme catalyses ITP + H2O = IMP + diphosphate + H(+). In terms of biological role, pyrophosphatase that catalyzes the hydrolysis of nucleoside triphosphates to their monophosphate derivatives, with a high preference for the non-canonical purine nucleotides XTP (xanthosine triphosphate), dITP (deoxyinosine triphosphate) and ITP. Seems to function as a house-cleaning enzyme that removes non-canonical purine nucleotides from the nucleotide pool, thus preventing their incorporation into DNA/RNA and avoiding chromosomal lesions. The chain is dITP/XTP pyrophosphatase from Nitrosomonas europaea (strain ATCC 19718 / CIP 103999 / KCTC 2705 / NBRC 14298).